The sequence spans 354 residues: Homer protein homolog 1 (354 aa).

Residues 1-110 (MGEQPIFSTR…EKFQEFKEAA (110 aa)) enclose the WH1 domain. At G2 the chain carries N-acetylglycine. A disordered region spans residues 114 to 172 (KEKSQEKMELTSTPSQESAGGDLQSPLTPESINGTDDERTPDLTQNSEPRPEPTQNALP). Polar residues-rich tracts occupy residues 138–147 (SPLTPESING) and 155–172 (DLTQNSEPRPEPTQNALP). Residues 181 to 352 (KHWEAELATL…LRDNLAKLLE (172 aa)) are a coiled coil. The required for tetramerization stretch occupies residues 290-354 (KLQEVEIRNK…DNLAKLLERS (65 aa)). A Phosphoserine modification is found at S306.

This sequence belongs to the Homer family. As to quaternary structure, tetramer; this tetrameric structure is critical for forming the high-order complex with SHANK1, which in turn is necessary for the structural and functional integrity of dendritic spines. Interacts with GRM1, GRM5, ITPR1, DNM3, RYR1, RYR2 and SHANK3. Interacts with IFT57 and OPHN1. Encodes a coiled-coil structure that mediates homo- and heteromultimerization. Interacts with SHANK1; forms high-order polymerized complex with a mesh-like network structure, at least composed of SHANK1, HOMER1 and DLGAP1; the complex formation is SHANK1 multimerization dependent. Interacts with NFATC4. Interacts with DAGLA (via PPXXF motif); this interaction is required for the cell membrane localization of DAGLA. Interacts with SRGAP2.

It is found in the cytoplasm. It localises to the postsynaptic density. Its subcellular location is the synapse. The protein localises to the cell projection. The protein resides in the dendritic spine. Its function is as follows. Postsynaptic density scaffolding protein. Binds and cross-links cytoplasmic regions of GRM1, GRM5, ITPR1, DNM3, RYR1, RYR2, SHANK1 and SHANK3. By physically linking GRM1 and GRM5 with ER-associated ITPR1 receptors, it aids the coupling of surface receptors to intracellular calcium release. May also couple GRM1 to PI3 kinase through its interaction with AGAP2. Forms a high-order complex with SHANK1, which in turn is necessary for the structural and functional integrity of dendritic spines. Negatively regulates T cell activation by inhibiting the calcineurin-NFAT pathway. Acts by competing with calcineurin/PPP3CA for NFAT protein binding, hence preventing NFAT activation by PPP3CA. The sequence is that of Homer protein homolog 1 from Bos taurus (Bovine).